We begin with the raw amino-acid sequence, 346 residues long: Proto-oncogene serine/threonine-protein kinase mos (346 aa).

Positions 60-341 (VCLLQRLGAG…RPLLVDLTSL (282 aa)) constitute a Protein kinase domain. Residues 66–74 (LGAGGFGSV) and Lys87 each bind ATP. Asp201 (proton acceptor) is an active-site residue.

The protein belongs to the protein kinase superfamily. Ser/Thr protein kinase family.

It carries out the reaction L-seryl-[protein] + ATP = O-phospho-L-seryl-[protein] + ADP + H(+). The catalysed reaction is L-threonyl-[protein] + ATP = O-phospho-L-threonyl-[protein] + ADP + H(+). This Chlorocebus aethiops (Green monkey) protein is Proto-oncogene serine/threonine-protein kinase mos.